The chain runs to 395 residues: GPI-anchor transamidase (395 aa).

The signal sequence occupies residues 1-27; that stretch reads MVDTCFLSRGLTTLAGLLLLPFGSLAA. Topologically, residues 28–368 are lumenal; it reads SQIEDQAEQF…PKLKDWHPPG (341 aa). Residues Asp79, Ile82, Glu118, and Asp120 each coordinate Ca(2+). The active-site Proton donor is His164. Catalysis depends on Cys206, which acts as the Nucleophile; acyl-thioester intermediate. 3 residues coordinate a protein: Cys206, Ser232, and Ser234. The segment at 231-236 is autoinhibitory loop; sequence DSLSHQ. Residues Cys275 and Cys280 are joined by a disulfide bond. Residues 369–385 traverse the membrane as a helical segment; sequence GFILGLWALIIMVFFKT. Topologically, residues 386–395 are cytoplasmic; the sequence is YGIKHMKFIF.

It belongs to the peptidase C13 family. In terms of assembly, heteropentamer. Part of the GPI-anchor transamidase complex, consisting of PIGK, PIGT, PIGS, PIGU and GAA1. Interacts with GPAA1. Interacts with PIGT; this interaction, via a disulfide link, stabilizes the expression of GAA1 and PIGK and links them to PIGS. The disulfide bond between PIGK/GPI8 and PIGT is important for normal enzyme activity.

It is found in the endoplasmic reticulum membrane. The protein operates within glycolipid biosynthesis; glycosylphosphatidylinositol-anchor biosynthesis. Its activity is regulated as follows. In the absence of proproteins substrates, exists in an inactive state with a disrupted catalytic site by an autoinhibitory loop. The binding of proprotein substrates, particularly the CSP region, to GPI-T triggers concerted conformational changes that alleviate the inhibition by the autoinhibitory loop. Meanwhile, proprotein residues near the omega- site induce the formation of a catalytic cleft for catalysis, following which the products are released and GPI-T reverts to the inactive state. Its function is as follows. Catalytic subunit of the glycosylphosphatidylinositol-anchor (GPI-anchor) transamidase (GPI-T) complex that catalyzes the formation of the linkage between a proprotein and a GPI-anchor and participates in GPI anchored protein biosynthesis. Recognizes diverse proproteins at a C-terminal signal peptide (CSP) region that lacks consensus sequence and replaces it with a GPI-anchor via a transamidation reaction. Transamidation catalysis reaction follows a two-phase mechanism. In the acyl-enzyme phase, the carbonyl group of the proproteins's omega-site undergoes a nucleophilic attack forming an enzyme-substrate thioester bond. Followed by a general acid catalysis that allows CSP releasing, regenerating the carbonyl, and forming the acyl-enzyme intermediate. In the GPI-anchor attachment phase, the amino group of the GPI-anchor's ethanolamine phosphate, the one on third mannose (EtNP3), mediates a nucleophilic attack on the carbonyl of the acyl-enzyme intermediate, replacing the CSP, allowing GPI-anchor attachment to the omega-residue, therefore forming the product and freeing the enzyme. The sequence is that of GPI-anchor transamidase from Bos taurus (Bovine).